A 119-amino-acid chain; its full sequence is Large ribosomal subunit protein bL20 (119 aa).

The protein belongs to the bacterial ribosomal protein bL20 family.

Its function is as follows. Binds directly to 23S ribosomal RNA and is necessary for the in vitro assembly process of the 50S ribosomal subunit. It is not involved in the protein synthesizing functions of that subunit. The protein is Large ribosomal subunit protein bL20 of Jannaschia sp. (strain CCS1).